Consider the following 252-residue polypeptide: Mediator of RNA polymerase II transcription subunit 20 (252 aa).

This sequence belongs to the Mediator complex subunit 20 family. In terms of assembly, component of the Mediator complex, which includes at least CDK8, MED4, MED6, MED11, MED14, MED17, MED18, MED20, MED21, MED22, MED27, MED28, MED30 and MED31.

It localises to the nucleus. Component of the Mediator complex, a coactivator involved in the regulated transcription of nearly all RNA polymerase II-dependent genes. Mediator functions as a bridge to convey information from gene-specific regulatory proteins to the basal RNA polymerase II transcription machinery. Mediator is recruited to promoters by direct interactions with regulatory proteins and serves as a scaffold for the assembly of a functional preinitiation complex with RNA polymerase II and the general transcription factors. Required for activated transcription of the MtnA gene. This chain is Mediator of RNA polymerase II transcription subunit 20 (MED20), found in Drosophila melanogaster (Fruit fly).